A 315-amino-acid polypeptide reads, in one-letter code: Putative pyruvate, phosphate dikinase regulatory protein (315 aa).

The segment at 1–32 (MGPFGARASPEAGQVVKQPLTDDPQESLAQGE) is disordered. 189–196 (GVSRTSKT) is a binding site for ADP.

This sequence belongs to the pyruvate, phosphate/water dikinase regulatory protein family. PDRP subfamily.

The catalysed reaction is N(tele)-phospho-L-histidyl/L-threonyl-[pyruvate, phosphate dikinase] + ADP = N(tele)-phospho-L-histidyl/O-phospho-L-threonyl-[pyruvate, phosphate dikinase] + AMP + H(+). The enzyme catalyses N(tele)-phospho-L-histidyl/O-phospho-L-threonyl-[pyruvate, phosphate dikinase] + phosphate + H(+) = N(tele)-phospho-L-histidyl/L-threonyl-[pyruvate, phosphate dikinase] + diphosphate. Bifunctional serine/threonine kinase and phosphorylase involved in the regulation of the pyruvate, phosphate dikinase (PPDK) by catalyzing its phosphorylation/dephosphorylation. The chain is Putative pyruvate, phosphate dikinase regulatory protein from Caulobacter vibrioides (strain ATCC 19089 / CIP 103742 / CB 15) (Caulobacter crescentus).